The following is a 297-amino-acid chain: Cyclin-dependent kinase 1 (297 aa).

One can recognise a Protein kinase domain in the interval 4–287; the sequence is FEKIEKIGEG…AKDILEHPYF (284 aa). ATP is bound by residues 10 to 18 and Lys-33; that span reads IGEGTYGVV. Thr-14 is subject to Phosphothreonine. Residue Tyr-15 is modified to Phosphotyrosine. The active-site Proton acceptor is Asp-128. Tyr-160 carries the phosphotyrosine modification. Thr-161 is subject to Phosphothreonine; by CAK.

This sequence belongs to the protein kinase superfamily. CMGC Ser/Thr protein kinase family. CDC2/CDKX subfamily. Forms a stable but non-covalent complex with a regulatory subunit and with a cyclin. Component of the Frs-CycA-Cdk1 complex composed of Cdk1, CycA and Z600.

The protein localises to the nucleus. The enzyme catalyses L-seryl-[protein] + ATP = O-phospho-L-seryl-[protein] + ADP + H(+). It catalyses the reaction L-threonyl-[protein] + ATP = O-phospho-L-threonyl-[protein] + ADP + H(+). It carries out the reaction [DNA-directed RNA polymerase] + ATP = phospho-[DNA-directed RNA polymerase] + ADP + H(+). With respect to regulation, phosphorylation at Thr-14 or Tyr-15 inactivates the enzyme, while phosphorylation at Thr-161 activates it. Functionally, plays a key role in the control of the eukaryotic cell cycle. Required for entry into S-phase and mitosis. In embryos, promotes the release of Rif1 from chromatin during mid-blastula transition. p34 is a component of the kinase complex that phosphorylates the repetitive C-terminus of RNA polymerase II. The protein is Cyclin-dependent kinase 1 of Drosophila melanogaster (Fruit fly).